A 241-amino-acid chain; its full sequence is 3-oxoacyl-[acyl-carrier-protein] reductase FabG (241 aa).

Residues 13–16 (GASG), Ser-38, 57–58 (EI), and Asn-83 contribute to the NADP(+) site. Ser-135 serves as a coordination point for substrate. Tyr-148 acts as the Proton acceptor in catalysis. NADP(+) contacts are provided by residues 148–152 (YCASK) and Ile-181.

This sequence belongs to the short-chain dehydrogenases/reductases (SDR) family. As to quaternary structure, homotetramer.

It carries out the reaction a (3R)-hydroxyacyl-[ACP] + NADP(+) = a 3-oxoacyl-[ACP] + NADPH + H(+). It functions in the pathway lipid metabolism; fatty acid biosynthesis. In terms of biological role, catalyzes the NADPH-dependent reduction of beta-ketoacyl-ACP substrates to beta-hydroxyacyl-ACP products, the first reductive step in the elongation cycle of fatty acid biosynthesis. This is 3-oxoacyl-[acyl-carrier-protein] reductase FabG (fabG) from Rickettsia felis (strain ATCC VR-1525 / URRWXCal2) (Rickettsia azadi).